A 291-amino-acid chain; its full sequence is Pantothenate synthetase 1 (291 aa).

His37 functions as the Proton donor in the catalytic mechanism. Position 147–150 (147–150) interacts with ATP; that stretch reads GEKD. Gln153 lines the (R)-pantoate pocket. ATP is bound at residue 184-187; it reads ISSR.

This sequence belongs to the pantothenate synthetase family. In terms of assembly, homodimer.

The protein resides in the cytoplasm. It carries out the reaction (R)-pantoate + beta-alanine + ATP = (R)-pantothenate + AMP + diphosphate + H(+). It functions in the pathway cofactor biosynthesis; (R)-pantothenate biosynthesis; (R)-pantothenate from (R)-pantoate and beta-alanine: step 1/1. Functionally, catalyzes the condensation of pantoate with beta-alanine in an ATP-dependent reaction via a pantoyl-adenylate intermediate. The sequence is that of Pantothenate synthetase 1 from Frankia alni (strain DSM 45986 / CECT 9034 / ACN14a).